The sequence spans 441 residues: Mitochondrial distribution and morphology protein 12 (441 aa).

The SMP-LTD domain maps to 1-441 (MSIDIDWERA…VYPSFWTFLV (441 aa)). 2 disordered regions span residues 70 to 89 (YEDGDEDLSVSSEEQSPMRE) and 180 to 289 (TPLR…RMRE). 2 stretches are compositionally biased toward polar residues: residues 226-245 (SRPSTVNTGNTLFSRGSVST) and 253-263 (SSQTVLANNPG).

The protein belongs to the MDM12 family. Component of the ER-mitochondria encounter structure (ERMES) or MDM complex, composed of MMM1, MDM10, MDM12 and MDM34. An MMM1 homodimer associates with one molecule of MDM12 on each side in a pairwise head-to-tail manner, and the SMP-LTD domains of MMM1 and MDM12 generate a continuous hydrophobic tunnel for phospholipid trafficking.

Its subcellular location is the mitochondrion outer membrane. The protein localises to the endoplasmic reticulum membrane. Component of the ERMES/MDM complex, which serves as a molecular tether to connect the endoplasmic reticulum (ER) and mitochondria. Components of this complex are involved in the control of mitochondrial shape and protein biogenesis, and function in nonvesicular lipid trafficking between the ER and mitochondria. MDM12 is required for the interaction of the ER-resident membrane protein MMM1 and the outer mitochondrial membrane-resident beta-barrel protein MDM10. The MDM12-MMM1 subcomplex functions in the major beta-barrel assembly pathway that is responsible for biogenesis of all mitochondrial outer membrane beta-barrel proteins, and acts in a late step after the SAM complex. The MDM10-MDM12-MMM1 subcomplex further acts in the TOM40-specific pathway after the action of the MDM12-MMM1 complex. Essential for establishing and maintaining the structure of mitochondria and maintenance of mtDNA nucleoids. In Paracoccidioides brasiliensis (strain Pb03), this protein is Mitochondrial distribution and morphology protein 12.